Reading from the N-terminus, the 400-residue chain is Tryptophan synthase beta chain (400 aa).

Lys92 is subject to N6-(pyridoxal phosphate)lysine.

It belongs to the TrpB family. In terms of assembly, tetramer of two alpha and two beta chains. It depends on pyridoxal 5'-phosphate as a cofactor.

It catalyses the reaction (1S,2R)-1-C-(indol-3-yl)glycerol 3-phosphate + L-serine = D-glyceraldehyde 3-phosphate + L-tryptophan + H2O. Its pathway is amino-acid biosynthesis; L-tryptophan biosynthesis; L-tryptophan from chorismate: step 5/5. In terms of biological role, the beta subunit is responsible for the synthesis of L-tryptophan from indole and L-serine. This is Tryptophan synthase beta chain from Neisseria gonorrhoeae.